Here is a 233-residue protein sequence, read N- to C-terminus: Large ribosomal subunit protein uL1 (233 aa).

The protein belongs to the universal ribosomal protein uL1 family. In terms of assembly, part of the 50S ribosomal subunit.

Binds directly to 23S rRNA. The L1 stalk is quite mobile in the ribosome, and is involved in E site tRNA release. Functionally, protein L1 is also a translational repressor protein, it controls the translation of the L11 operon by binding to its mRNA. The protein is Large ribosomal subunit protein uL1 of Trichlorobacter lovleyi (strain ATCC BAA-1151 / DSM 17278 / SZ) (Geobacter lovleyi).